Reading from the N-terminus, the 379-residue chain is Cobalt-precorrin-5B C(1)-methyltransferase (379 aa).

Belongs to the CbiD family.

It carries out the reaction Co-precorrin-5B + S-adenosyl-L-methionine = Co-precorrin-6A + S-adenosyl-L-homocysteine. It functions in the pathway cofactor biosynthesis; adenosylcobalamin biosynthesis; cob(II)yrinate a,c-diamide from sirohydrochlorin (anaerobic route): step 6/10. Functionally, catalyzes the methylation of C-1 in cobalt-precorrin-5B to form cobalt-precorrin-6A. The sequence is that of Cobalt-precorrin-5B C(1)-methyltransferase from Edwardsiella ictaluri (strain 93-146).